The primary structure comprises 144 residues: Large ribosomal subunit protein uL11 (144 aa).

Belongs to the universal ribosomal protein uL11 family. Part of the ribosomal stalk of the 50S ribosomal subunit. Interacts with L10 and the large rRNA to form the base of the stalk. L10 forms an elongated spine to which L12 dimers bind in a sequential fashion forming a multimeric L10(L12)X complex. Post-translationally, one or more lysine residues are methylated.

In terms of biological role, forms part of the ribosomal stalk which helps the ribosome interact with GTP-bound translation factors. The chain is Large ribosomal subunit protein uL11 from Neisseria meningitidis serogroup B (strain ATCC BAA-335 / MC58).